Here is a 408-residue protein sequence, read N- to C-terminus: Digeranylgeranylglycerophospholipid reductase 1 (408 aa).

FAD-binding residues include Ala15, Glu34, Cys45, Ala46, Gly48, Arg99, Val123, Asp279, Gly291, and Ile292.

This sequence belongs to the geranylgeranyl reductase family. DGGGPL reductase subfamily. It depends on FAD as a cofactor.

It catalyses the reaction a 2,3-bis-O-phytanyl-sn-glycerol 1-phospholipid + 8 oxidized 2[4Fe-4S]-[ferredoxin] = a 2,3-bis-O-(geranylgeranyl)-sn-glycerol 1-phospholipid + 8 reduced 2[4Fe-4S]-[ferredoxin] + 16 H(+). The enzyme catalyses 2,3-bis-O-(phytanyl)-sn-glycerol 1-phosphate + 8 oxidized 2[4Fe-4S]-[ferredoxin] = 2,3-bis-O-(geranylgeranyl)-sn-glycerol 1-phosphate + 8 reduced 2[4Fe-4S]-[ferredoxin] + 16 H(+). The catalysed reaction is a 2,3-bis-O-phytanyl-sn-glycerol 1-phospholipid + 8 A = a 2,3-bis-O-(geranylgeranyl)-sn-glycerol 1-phospholipid + 8 AH2. It carries out the reaction CDP-2,3-bis-O-(geranylgeranyl)-sn-glycerol + 8 AH2 = CDP-2,3-bis-O-(phytanyl)-sn-glycerol + 8 A. It catalyses the reaction archaetidylserine + 8 AH2 = 2,3-bis-O-phytanyl-sn-glycero-3-phospho-L-serine + 8 A. It functions in the pathway membrane lipid metabolism; glycerophospholipid metabolism. Its function is as follows. Is involved in the reduction of 2,3-digeranylgeranylglycerophospholipids (unsaturated archaeols) into 2,3-diphytanylglycerophospholipids (saturated archaeols) in the biosynthesis of archaeal membrane lipids. Catalyzes the formation of archaetidic acid (2,3-di-O-phytanyl-sn-glyceryl phosphate) from 2,3-di-O-geranylgeranylglyceryl phosphate (DGGGP) via the hydrogenation of each double bond of the isoprenoid chains. Is also probably able to reduce double bonds of geranyl groups in CDP-2,3-bis-O-(geranylgeranyl)-sn-glycerol and archaetidylserine, thus acting at various stages in the biosynthesis of archaeal membrane lipids. The polypeptide is Digeranylgeranylglycerophospholipid reductase 1 (Methanococcoides burtonii (strain DSM 6242 / NBRC 107633 / OCM 468 / ACE-M)).